Reading from the N-terminus, the 122-residue chain is Large ribosomal subunit protein uL14 (122 aa).

The protein belongs to the universal ribosomal protein uL14 family. In terms of assembly, part of the 50S ribosomal subunit. Forms a cluster with proteins L3 and L19. In the 70S ribosome, L14 and L19 interact and together make contacts with the 16S rRNA in bridges B5 and B8.

Functionally, binds to 23S rRNA. Forms part of two intersubunit bridges in the 70S ribosome. This Cyanothece sp. (strain PCC 7425 / ATCC 29141) protein is Large ribosomal subunit protein uL14.